The chain runs to 273 residues: ABC transporter glutamine-binding protein GlnH (273 aa).

An N-terminal signal peptide occupies residues 1–20; it reads MKKIFSLALISLFAVILLAA. Cysteine 21 carries the N-palmitoyl cysteine lipid modification. Cysteine 21 carries S-diacylglycerol cysteine lipidation.

The protein belongs to the bacterial solute-binding protein 3 family. The complex is composed of two ATP-binding proteins (GlnQ), two transmembrane proteins (GlnM and GlnP) and a solute-binding protein (GlnH).

Its subcellular location is the cell membrane. In terms of biological role, part of the ABC transporter complex GlnHMPQ involved in glutamine transport. This chain is ABC transporter glutamine-binding protein GlnH (glnH), found in Bacillus subtilis (strain 168).